A 767-amino-acid chain; its full sequence is Pyrin (767 aa).

A Pyrin domain is found at 1–92 (MAKTLGDHLL…AEELRKATGT (92 aa)). Residues 94-219 (HLIEENRVGG…LQGLYNNAPG (126 aa)) are disordered. 3 stretches are compositionally biased toward polar residues: residues 126-142 (GTQQ…SSQA), 165-176 (LDSQTKPWTRST), and 183-208 (TQGT…SSAG). The residue at position 241 (S241) is a Phosphoserine. A disordered region spans residues 311-346 (TSLIGEERCPTSWTENGNGSPETTESSGETAGSILS). Residues 321–340 (TSWTENGNGSPETTESSGET) show a composition bias toward polar residues. The segment at 439 to 481 (QSLPQCPRHMKQVLLLFCEDHREPICLICRLSLEHQGHRVRPI) adopts a B box-type zinc-finger fold. C444, H447, C467, and H473 together coordinate Zn(2+). Residues 481–510 (IEEAALEYKEQIREQLERLREMRGYVEEHR) adopt a coiled-coil conformation. Positions 489–647 (KEQIREQLER…CFSEMLSSEM (159 aa)) are required for homotrimerization and induction of pyroptosomes. Positions 697-719 (GGSEPKDYLHPQPAQDTPELHEI) are disordered.

As to quaternary structure, homotrimer. Interacts (via the B box-type zinc finger) with PSTPIP1. Interacts (via the B30.2/SPRY domain) with several components of the inflammasome complex, including CASP1 p20 and p10 subunits, CASP5, PYCARD, NLRP1, NLRP2 and NLRP3, as well as with unprocessed IL1B; this interaction may lead to autophagic degradation of these proteins. Component of the AIM2 PANoptosome complex, a multiprotein complex that drives inflammatory cell death (PANoptosis). Interacts with NFKBIA and RELA. Interacts weakly with VASP and ACTR3. Interacts with active ULK1 (phosphorylated on 'Ser-317') and BECN1 simultaneously. Also interacts with ATG16L1 (via WD repeats), and with ATG8 family members, including GABARAP, GABARAPL1 and, to a lesser extent, GABARAPL2, MAP1LC3A/LC3A and MAP1LC3C/LC3C. Interacts with TRIM21. Interacts with YWHAB, YWHAE, YWHAG, YWHAH, YWHAQ and YWHAZ; the interaction is required for the down-regulation of pyrin pro-inflammatory activity. Post-translationally, phosphorylation at Ser-241 is required for the interaction with 14-3-3 proteins and down-regulation of pyrin pro-inflammatory activity. Degraded along with the delivery of its substrates to autolysosomal compartments (at protein level). As to expression, expressed in spleen peripheral blood granulocytes. Not expressed in lymphocytes, thymus, testis, ovary, heart, brain, lung, liver, kidney and muscle.

Its subcellular location is the cytoplasm. The protein localises to the cytoskeleton. The protein resides in the cell projection. It localises to the ruffle. It is found in the lamellipodium. Its subcellular location is the cytoplasmic vesicle. The protein localises to the autophagosome. The protein resides in the nucleus. Functionally, involved in the regulation of innate immunity and the inflammatory response in response to IFNG/IFN-gamma. Organizes autophagic machinery by serving as a platform for the assembly of ULK1, Beclin 1/BECN1, ATG16L1, and ATG8 family members and recognizes specific autophagy targets, thus coordinating target recognition with assembly of the autophagic apparatus and initiation of autophagy. Acts as an autophagy receptor for the degradation of several inflammasome components, including CASP1, NLRP1 and NLRP3, hence preventing excessive IL1B- and IL18-mediated inflammation. However, it can also have a positive effect in the inflammatory pathway, acting as an innate immune sensor that triggers PYCARD/ASC specks formation, caspase-1 activation, and IL1B and IL18 production. Together with AIM2, also acts as a mediator of pyroptosis, necroptosis and apoptosis (PANoptosis), an integral part of host defense against pathogens, in response to bacterial infection. It is required for PSTPIP1-induced PYCARD/ASC oligomerization and inflammasome formation. Recruits PSTPIP1 to inflammasomes, and is required for PSTPIP1 oligomerization. This chain is Pyrin, found in Mus musculus (Mouse).